The following is a 320-amino-acid chain: Methenyltetrahydromethanopterin cyclohydrolase (320 aa).

This sequence belongs to the MCH family.

It localises to the cytoplasm. The catalysed reaction is 5,10-methenyl-5,6,7,8-tetrahydromethanopterin + H2O = N(5)-formyl-5,6,7,8-tetrahydromethanopterin + H(+). Catalyzes the hydrolysis of methenyl-H(4)MPT(+) to 5-formyl-H(4)MPT. The protein is Methenyltetrahydromethanopterin cyclohydrolase of Methanococcoides burtonii (strain DSM 6242 / NBRC 107633 / OCM 468 / ACE-M).